A 635-amino-acid polypeptide reads, in one-letter code: Probable ethylene response sensor 2 (635 aa).

Transmembrane regions (helical) follow at residues 24 to 44, 59 to 79, and 94 to 114; these read ISDF…IYFV, FGAF…TFAI, and ATAV…PDLL. The Cu cation site is built by C66 and H70. One can recognise a GAF domain in the interval 159 to 308; that stretch reads DRHTILRTTL…VVADQVAVAL (150 aa). The Histidine kinase domain maps to 351-589; that stretch reads VMNHEMRTPM…MFFVKLGMPE (239 aa). H354 is modified (phosphohistidine; by autocatalysis).

The protein belongs to the ethylene receptor family. Homodimer. The cofactor is Cu cation.

It localises to the endoplasmic reticulum membrane. It carries out the reaction ATP + protein L-histidine = ADP + protein N-phospho-L-histidine.. Its function is as follows. Ethylene receptor related to bacterial two-component regulators. Acts as a negative regulator of ethylene signaling. May play a role in the regulation of flowering by up-regulating GI (GIGANTEA) and RCN1 and regulate starch accumulation by down-regulating the alpha-amylase AMY3D. This chain is Probable ethylene response sensor 2 (ERS2), found in Oryza sativa subsp. japonica (Rice).